The sequence spans 384 residues: S-adenosylmethionine synthase (384 aa).

Residue histidine 15 participates in ATP binding. Position 17 (aspartate 17) interacts with Mg(2+). Glutamate 43 serves as a coordination point for K(+). L-methionine-binding residues include glutamate 56 and glutamine 99. The interval 99-109 (QSPDINQGVDR) is flexible loop. Residues 164 to 166 (DAK), 230 to 231 (RF), aspartate 239, 245 to 246 (RK), alanine 262, and lysine 266 each bind ATP. Residue aspartate 239 coordinates L-methionine. Lysine 270 lines the L-methionine pocket.

This sequence belongs to the AdoMet synthase family. As to quaternary structure, homotetramer; dimer of dimers. It depends on Mg(2+) as a cofactor. K(+) is required as a cofactor.

The protein localises to the cytoplasm. It catalyses the reaction L-methionine + ATP + H2O = S-adenosyl-L-methionine + phosphate + diphosphate. It participates in amino-acid biosynthesis; S-adenosyl-L-methionine biosynthesis; S-adenosyl-L-methionine from L-methionine: step 1/1. Functionally, catalyzes the formation of S-adenosylmethionine (AdoMet) from methionine and ATP. The overall synthetic reaction is composed of two sequential steps, AdoMet formation and the subsequent tripolyphosphate hydrolysis which occurs prior to release of AdoMet from the enzyme. The protein is S-adenosylmethionine synthase of Escherichia fergusonii (strain ATCC 35469 / DSM 13698 / CCUG 18766 / IAM 14443 / JCM 21226 / LMG 7866 / NBRC 102419 / NCTC 12128 / CDC 0568-73).